Consider the following 263-residue polypeptide: uncharacterized protein (263 aa).

Residue 13–20 (TGSTSGIG) coordinates NADP(+). A substrate-binding site is contributed by S141. Y154 serves as the catalytic Proton acceptor.

Belongs to the short-chain dehydrogenases/reductases (SDR) family.

This is an uncharacterized protein from Bacillus subtilis (strain 168).